The primary structure comprises 314 residues: Malate dehydrogenase (314 aa).

NAD(+) contacts are provided by residues 11-16 (GSGNIG) and Asp35. Arg84 and Arg90 together coordinate substrate. Residues Asn97 and 120-122 (ITN) each bind NAD(+). Substrate-binding residues include Asn122 and Arg153. The Proton acceptor role is filled by His177.

It belongs to the LDH/MDH superfamily. MDH type 3 family.

The catalysed reaction is (S)-malate + NAD(+) = oxaloacetate + NADH + H(+). Functionally, catalyzes the reversible oxidation of malate to oxaloacetate. The polypeptide is Malate dehydrogenase (Rickettsia bellii (strain RML369-C)).